Here is a 632-residue protein sequence, read N- to C-terminus: Probable potassium transport system protein Kup 1 (632 aa).

The next 12 membrane-spanning stretches (helical) occupy residues 17–37 (LFYL…TSPL), 60–80 (LISL…VLFL), 106–126 (TALL…DAMI), 144–164 (PSLA…LFVV), 175–195 (FFGP…ISHI), 210–230 (AVSF…AVFL), 254–274 (WFLL…ALVL), 292–312 (ALLP…QAVI), 344–364 (IFLP…VLSF), 370–390 (LATA…IMAF), 401–421 (LPVA…FLGA), and 426–446 (IHDG…VMWT).

Belongs to the HAK/KUP transporter (TC 2.A.72) family.

Its subcellular location is the cell inner membrane. The enzyme catalyses K(+)(in) + H(+)(in) = K(+)(out) + H(+)(out). In terms of biological role, transport of potassium into the cell. Likely operates as a K(+):H(+) symporter. This chain is Probable potassium transport system protein Kup 1, found in Rhizobium etli (strain ATCC 51251 / DSM 11541 / JCM 21823 / NBRC 15573 / CFN 42).